We begin with the raw amino-acid sequence, 249 residues long: Isoprenyl transferase (249 aa).

The active site involves Asp-25. Asp-25 lines the Mg(2+) pocket. Residues 26–29 (GNGR), Trp-30, Arg-38, His-42, and 70–72 (STE) contribute to the substrate site. Asn-73 acts as the Proton acceptor in catalysis. Residues Trp-74, Arg-76, Arg-197, and 203-205 (RLS) each bind substrate. Glu-216 contacts Mg(2+).

Belongs to the UPP synthase family. In terms of assembly, homodimer. Mg(2+) is required as a cofactor.

Functionally, catalyzes the condensation of isopentenyl diphosphate (IPP) with allylic pyrophosphates generating different type of terpenoids. The chain is Isoprenyl transferase from Streptococcus pyogenes serotype M6 (strain ATCC BAA-946 / MGAS10394).